The sequence spans 1087 residues: Exoglucanase XynX (1087 aa).

An N-terminal signal peptide occupies residues 1–30 (MKNNLSKFVSIFTAFIMIFGTSLFFPHVSA). The CBM-cenC domain occupies 37-188 (ANLVSNGDFE…YIDDVVVTPQ (152 aa)). A GH10 domain is found at 204–527 (QNDIPDLSSV…KPAYWAIADP (324 aa)). Catalysis depends on E347, which acts as the Proton donor. D389 is an active-site residue. Residue E452 is the Nucleophile of the active site. SLH domains are found at residues 903–966 (KKSV…YNGE), 967–1025 (FSDV…KEEN), and 1028–1087 (ATSF…SNNL).

It belongs to the glycosyl hydrolase 10 (cellulase F) family.

It catalyses the reaction Hydrolysis of (1-&gt;4)-beta-D-glucosidic linkages in cellulose and cellotetraose, releasing cellobiose from the non-reducing ends of the chains.. The sequence is that of Exoglucanase XynX (xynX) from Acetivibrio thermocellus (Hungateiclostridium thermocellum).